A 324-amino-acid chain; its full sequence is Bacilliredoxin reductase Bdr (324 aa).

S-bacillithiol cysteine disulfide is present on Cys-220.

In terms of assembly, interacts with BrxC. FAD serves as cofactor. C-terminal Cys can react with bacillithiol (BSH) to form mixed disulfides. S-bacillithiolation protects Cys residues against overoxidation by acting as a redox switch in response to oxidative stress.

Functionally, S-bacillithiolation is the formation of mixed disulfide bonds between protein thiols and the general thiol reductant bacillithiol (BSH) under oxidative stress. BSH is an equivalent of glutathione (GSH) in Firmicutes. This protein is a NADPH-dependent bacilliredoxin reductase, which debacillithiolates (removes BSH) the S-bacillithiolated BrxB (BrxB-SSB), and to a lesser extent BrxC (BrxC-SSB). Involved in a redox cascade increasing the efficacy of BrxB function by reducing BrxB-SSB and thus reactivating it. Has NADPH-dependent oxidase activity under aerobic conditions producing hydrogen peroxide (H(2)O(2)). The polypeptide is Bacilliredoxin reductase Bdr (Bacillus subtilis (strain 168)).